A 113-amino-acid polypeptide reads, in one-letter code: U11-theraphotoxin-Hhn1a (113 aa).

Residues 1–21 (MDTVRVAFLLVLVLAVSLGQA) form the signal peptide. Residues 22–74 (DKDENRMEMQEKTEQGKSYLDFAENLLLQKLEELEAKLLEEDSEESRNSRQKR) constitute a propeptide that is removed on maturation. A compositionally biased stretch (basic and acidic residues) spans 60–69 (LEEDSEESRN). The tract at residues 60–83 (LEEDSEESRNSRQKRCIGEGVPCD) is disordered. Cystine bridges form between Cys-75-Cys-90, Cys-82-Cys-95, and Cys-89-Cys-110.

This sequence belongs to the neurotoxin 14 (magi-1) family. 01 (HNTX-16) subfamily. In terms of tissue distribution, expressed by the venom gland.

It localises to the secreted. Its function is as follows. Probable ion channel inhibitor. The sequence is that of U11-theraphotoxin-Hhn1a from Cyriopagopus hainanus (Chinese bird spider).